We begin with the raw amino-acid sequence, 185 residues long: Ribosome-recycling factor (185 aa).

Belongs to the RRF family.

The protein localises to the cytoplasm. Its function is as follows. Responsible for the release of ribosomes from messenger RNA at the termination of protein biosynthesis. May increase the efficiency of translation by recycling ribosomes from one round of translation to another. In Geobacter metallireducens (strain ATCC 53774 / DSM 7210 / GS-15), this protein is Ribosome-recycling factor.